The following is a 250-amino-acid chain: Cyclopentanol dehydrogenase (250 aa).

Residues M18, D37, D63, V64, N90, Y155, K159, I188, T190, and T193 each contribute to the NAD(+) site. Y155 serves as the catalytic Proton acceptor.

It belongs to the short-chain dehydrogenases/reductases (SDR) family.

It catalyses the reaction cyclopentanol + NAD(+) = cyclopentanone + NADH + H(+). It carries out the reaction cyclohexanol + NAD(+) = cyclohexanone + NADH + H(+). It functions in the pathway alcohol metabolism; cyclopentanol degradation; 5-valerolactone from cyclopentanol: step 1/2. Its function is as follows. Catalyzes the oxidation of cyclopentanol to cyclopentanone and cyclohexanol to cyclohexanone. The activity toward cyclohexanol is 60% that of cyclopentanol. The protein is Cyclopentanol dehydrogenase of Comamonas sp. (strain NCIMB 9872).